The chain runs to 185 residues: Ribosome-recycling factor (185 aa).

Residues 138–185 (ALKKQEKDGEITEDEERRLEKEVQKVTDESTKKIDQMADNKRKEIIQG) form a disordered region.

This sequence belongs to the RRF family.

The protein resides in the cytoplasm. Functionally, responsible for the release of ribosomes from messenger RNA at the termination of protein biosynthesis. May increase the efficiency of translation by recycling ribosomes from one round of translation to another. The polypeptide is Ribosome-recycling factor (Lactobacillus delbrueckii subsp. bulgaricus (strain ATCC BAA-365 / Lb-18)).